The sequence spans 776 residues: MASLIYRQLLTNSFTVDLSDEIETIGSEKNQNVTINPGPFAQIGYAPVDWGPGETNDSTTVEPVLDGPYKPTSFNPPTDYWMLLSPSSPGAVVEGTNNTDRWLATILIEPNVASTTRTYTIFGSKEAITVENTSQNKWKFIDLAKTSLTGSYSQYGILLSKPKLYAIMKRSGYLYTYSGETPDAITDYYTTTNYDSVNMTAYCDFYIIPWAQEALCTQYINNGLPPIQNTRNVVARPLSSRSIVVRRAQANEDVVISKASLWKEMQYNRDITIRFKFANAIIKSGGLGYKWSEISFKPANYQYTYTRDGEEVTAHTTCSVNGVNNFDFFGGALPTDFVISRYEVIKENSFVYVDYWDDSQAFRNMMYVRSLAADLNSVMCTGGVYEFSLPVGQWPAMTGGAVSLRAAGVTLSTQFTDFVSLNSLRFRFRLSVEEPSFSITRTRVSGLYGLPAANPNNGREYYEVAGRFSLISLVPSNDDHQTPIMNSVTVRQDLERQLSELRDEFNALSQEIAMSQLIDLALLPLDMFSMFSGIKATFDAVKSMATSVMKKFKKSGLASSVSTLTDSLSDAASSMSRSGSIRSISSNSSVWTDVSSTLYDLPSYMSTVSTQTATISKRLRLKEITAQTEGMNFDDISAAVLKTKIDRSAQITPNTLPDIVTEASEKFIPNRSYRILNNNEAFETSTDGRFFAYRVDTFEEIPFDVQKFADLVTDLPVISAIIDFKTLKNLNDNYGITREQAFNLIRSDPRVLREFINQDNPIIRNRIEQLIMQCRL.

A spike head region spans residues 65 to 224; that stretch reads LDGPYKPTSF…LCTQYINNGL (160 aa). A disulfide bond links Cys203 and Cys216. Residues 248–479 form a spike body and stalk (antigen domain) region; sequence AQANEDVVIS…LISLVPSNDD (232 aa). The DGE motif; interaction with ITGA2/ITGB1 heterodimer motif lies at 308–310; it reads DGE. An intrachain disulfide couples Cys318 to Cys380. A hydrophobic; possible role in virus entry into host cell region spans residues 389-409; that stretch reads LPVGQWPAMTGGAVSLRAAGV. Positions 448 to 450 match the YGL motif; interaction with ITGA4 motif; it reads YGL. Positions 484 to 511 form a coiled coil; the sequence is IMNSVTVRQDLERQLSELRDEFNALSQE. The segment at 510–776 is spike foot; sequence QEIAMSQLID…IEQLIMQCRL (267 aa). The KID motif; interaction with HSPA8 signature appears at 644 to 646; that stretch reads KID.

The protein belongs to the rotavirus VP4 family. As to quaternary structure, homotrimer. VP4 adopts a dimeric appearance above the capsid surface, while forming a trimeric base anchored inside the capsid layer. Only hints of the third molecule are observed above the capsid surface. It probably performs a series of molecular rearrangements during viral entry. Prior to trypsin cleavage, it is flexible. The priming trypsin cleavage triggers its rearrangement into rigid spikes with approximate two-fold symmetry of their protruding parts. After an unknown second triggering event, cleaved VP4 may undergo another rearrangement, in which two VP5* subunits fold back on themselves and join a third subunit to form a tightly associated trimer, shaped like a folded umbrella. Interacts with VP6. Interacts with VP7. Homotrimer. The trimer is coiled-coil stabilized by its C-terminus, however, its N-terminus, known as antigen domain or 'body', seems to be flexible allowing it to self-associate either as a dimer or a trimer. Proteolytic cleavage by trypsin results in activation of VP4 functions and greatly increases infectivity. The penetration into the host cell is dependent on trypsin treatment of VP4. It produces two peptides, VP5* and VP8* that remain associated with the virion. Cleavage of VP4 by trypsin probably occurs in vivo in the lumen of the intestine prior to infection of enterocytes. Trypsin seems to be incorporated into the three-layered viral particles but remains inactive as long as the viral outer capsid is intact and would only be activated upon the solubilization of the latter.

Its subcellular location is the virion. It is found in the host rough endoplasmic reticulum. The protein localises to the host cell membrane. The protein resides in the host cytoplasm. It localises to the host cytoskeleton. Its subcellular location is the host endoplasmic reticulum-Golgi intermediate compartment. Spike-forming protein that mediates virion attachment to the host epithelial cell receptors and plays a major role in cell penetration, determination of host range restriction and virulence. Rotavirus attachment and entry into the host cell probably involves multiple sequential contacts between the outer capsid proteins VP4 and VP7, and the cell receptors. It is subsequently lost, together with VP7, following virus entry into the host cell. Following entry into the host cell, low intracellular or intravesicular Ca(2+) concentration probably causes the calcium-stabilized VP7 trimers to dissociate from the virion. This step is probably necessary for the membrane-disrupting entry step and the release of VP4, which is locked onto the virion by VP7. During the virus exit from the host cell, VP4 seems to be required to target the newly formed virions to the host cell lipid rafts. In terms of biological role, forms the spike 'foot' and 'body' and acts as a membrane permeabilization protein that mediates release of viral particles from endosomal compartments into the cytoplasm. During entry, the part of VP5* that protrudes from the virus folds back on itself and reorganizes from a local dimer to a trimer. This reorganization may be linked to membrane penetration by exposing VP5* hydrophobic region. In integrin-dependent strains, VP5* targets the integrin heterodimer ITGA2/ITGB1 for cell attachment. Functionally, forms the head of the spikes and mediates the recognition of specific host cell surface glycans. It is the viral hemagglutinin and an important target of neutralizing antibodies. In sialic acid-dependent strains, VP8* binds to host cell sialic acid, most probably a ganglioside, providing the initial contact. In some other strains, VP8* mediates the attachment to histo-blood group antigens (HBGAs) for viral entry. This is Outer capsid protein VP4 from Rotavirus A (isolate RVA/Mouse/Brazil/EHP/1981/G16P[20]) (RV-A).